Here is a 377-residue protein sequence, read N- to C-terminus: DNA-directed RNA polymerase subunit alpha (377 aa).

The tract at residues 1 to 259 (MSDSSHNLLY…KHFSVFEKMD (259 aa)) is alpha N-terminal domain (alpha-NTD). The alpha C-terminal domain (alpha-CTD) stretch occupies residues 279-377 (ILHKLVLGIN…KIRSSKNTKG (99 aa)).

Belongs to the RNA polymerase alpha chain family. As to quaternary structure, homodimer. The RNAP catalytic core consists of 2 alpha, 1 beta, 1 beta' and 1 omega subunit. When a sigma factor is associated with the core the holoenzyme is formed, which can initiate transcription.

It catalyses the reaction RNA(n) + a ribonucleoside 5'-triphosphate = RNA(n+1) + diphosphate. DNA-dependent RNA polymerase catalyzes the transcription of DNA into RNA using the four ribonucleoside triphosphates as substrates. This chain is DNA-directed RNA polymerase subunit alpha, found in Chlamydia trachomatis serovar L2 (strain ATCC VR-902B / DSM 19102 / 434/Bu).